The following is a 311-amino-acid chain: Very-long-chain 3-oxoacyl-CoA reductase-B (311 aa).

The chain crosses the membrane as a helical span at residues 8 to 28 (LFWVGAVTVLWLSVSSLWSLI). Residue 48–77 (GKWAVVTGATDGIGKAYAEELARRGFAIVL) coordinates NADP(+). The helical transmembrane segment at 125–145 (IGVLVNNVGVSYSYPEFFLNI) threads the bilayer. A substrate-binding site is contributed by S187. Catalysis depends on Y200, which acts as the Proton acceptor. Residues 269 to 289 (GYLPHAIMGWVTASLLPAKLL) form a helical membrane-spanning segment.

The protein belongs to the short-chain dehydrogenases/reductases (SDR) family. 17-beta-HSD 3 subfamily.

The protein localises to the endoplasmic reticulum membrane. The catalysed reaction is a very-long-chain (3R)-3-hydroxyacyl-CoA + NADP(+) = a very-long-chain 3-oxoacyl-CoA + NADPH + H(+). It carries out the reaction 17beta-estradiol + NAD(+) = estrone + NADH + H(+). It catalyses the reaction 17beta-estradiol + NADP(+) = estrone + NADPH + H(+). It participates in lipid metabolism; fatty acid biosynthesis. It functions in the pathway steroid biosynthesis; estrogen biosynthesis. Catalyzes the second of the four reactions of the long-chain fatty acids elongation cycle. This endoplasmic reticulum-bound enzymatic process, allows the addition of two carbons to the chain of long- and very long-chain fatty acids/VLCFAs per cycle. This enzyme has a 3-ketoacyl-CoA reductase activity, reducing 3-ketoacyl-CoA to 3-hydroxyacyl-CoA, within each cycle of fatty acid elongation. Thereby, it may participate in the production of VLCFAs of different chain lengths that are involved in multiple biological processes as precursors of membrane lipids and lipid mediators. May also catalyze the transformation of estrone (E1) into estradiol (E2) and play a role in estrogen formation. This Danio rerio (Zebrafish) protein is Very-long-chain 3-oxoacyl-CoA reductase-B (hsd17b12b).